The primary structure comprises 159 residues: Putative 4-hydroxy-4-methyl-2-oxoglutarate aldolase (159 aa).

Residues 78–81 (GDVI) and arginine 100 contribute to the substrate site. Aspartate 101 is an a divalent metal cation binding site.

This sequence belongs to the class II aldolase/RraA-like family. In terms of assembly, homotrimer. Requires a divalent metal cation as cofactor.

It carries out the reaction 4-hydroxy-4-methyl-2-oxoglutarate = 2 pyruvate. The enzyme catalyses oxaloacetate + H(+) = pyruvate + CO2. Functionally, catalyzes the aldol cleavage of 4-hydroxy-4-methyl-2-oxoglutarate (HMG) into 2 molecules of pyruvate. Also contains a secondary oxaloacetate (OAA) decarboxylase activity due to the common pyruvate enolate transition state formed following C-C bond cleavage in the retro-aldol and decarboxylation reactions. This Mycobacterium sp. (strain KMS) protein is Putative 4-hydroxy-4-methyl-2-oxoglutarate aldolase.